Here is a 148-residue protein sequence, read N- to C-terminus: Probable TtuB-protein conjugate cleaving protease (148 aa).

Residues 22–148 (HGLVLYVPRG…EGQEVALVVL (127 aa)) enclose the MPN domain. The active-site Proton donor/acceptor is Glu-47. Residues His-101, His-103, and Asp-114 each contribute to the Zn(2+) site. The JAMM motif motif lies at 101 to 114 (HSHPKGPALPSPRD).

Belongs to the peptidase M67B family. Zn(2+) is required as a cofactor.

In terms of biological role, probable metalloprotease that cleaves the ubiquitin-like modifier protein TtuB from protein conjugates, hydrolyzing the isopeptide bond between a lysine residue of the target protein and the C-terminal glycine of the modifier protein. Does not seem to work for all the TtuB conjugates. This Thermus thermophilus (strain ATCC BAA-163 / DSM 7039 / HB27) protein is Probable TtuB-protein conjugate cleaving protease.